The primary structure comprises 151 residues: Small ribosomal subunit protein uS11 (151 aa).

Serine 16 is subject to Phosphoserine. Glycyl lysine isopeptide (Lys-Gly) (interchain with G-Cter in SUMO2) cross-links involve residues lysine 61, lysine 63, and lysine 106. A disordered region spans residues 131–151 (DVTPIPSDSTRRKGGRRGRRL). Phosphothreonine is present on threonine 133. Serine 139 is subject to Phosphoserine. The segment covering 142 to 151 (RKGGRRGRRL) has biased composition (basic residues).

Belongs to the universal ribosomal protein uS11 family. As to quaternary structure, component of the small ribosomal subunit. Part of the small subunit (SSU) processome, composed of more than 70 proteins and the RNA chaperone small nucleolar RNA (snoRNA) U3.

Its subcellular location is the cytoplasm. It is found in the nucleus. The protein resides in the nucleolus. Its function is as follows. Component of the small ribosomal subunit. The ribosome is a large ribonucleoprotein complex responsible for the synthesis of proteins in the cell. Part of the small subunit (SSU) processome, first precursor of the small eukaryotic ribosomal subunit. During the assembly of the SSU processome in the nucleolus, many ribosome biogenesis factors, an RNA chaperone and ribosomal proteins associate with the nascent pre-rRNA and work in concert to generate RNA folding, modifications, rearrangements and cleavage as well as targeted degradation of pre-ribosomal RNA by the RNA exosome. This chain is Small ribosomal subunit protein uS11 (Rps14), found in Mus musculus (Mouse).